A 351-amino-acid chain; its full sequence is Glycerol-3-phosphate dehydrogenase 1-like protein (351 aa).

NAD(+) is bound at residue 12-17 (GSGNWG). Lys122 is a substrate binding site. An NAD(+)-binding site is contributed by Ala155. The active-site Proton acceptor is the Lys206. NAD(+) contacts are provided by Arg271, Lys298, and Gln300. 271–272 (RN) serves as a coordination point for substrate.

Belongs to the NAD-dependent glycerol-3-phosphate dehydrogenase family. As to quaternary structure, interacts with SCN5A. Most highly expressed in heart tissue, with lower levels in the skeletal muscle, kidney, lung and other organs.

The protein resides in the cytoplasm. It carries out the reaction sn-glycerol 3-phosphate + NAD(+) = dihydroxyacetone phosphate + NADH + H(+). Its function is as follows. Plays a role in regulating cardiac sodium current; decreased enzymatic activity with resulting increased levels of glycerol 3-phosphate activating the DPD1L-dependent SCN5A phosphorylation pathway, may ultimately lead to decreased sodium current; cardiac sodium current may also be reduced due to alterations of NAD(H) balance induced by DPD1L. This Homo sapiens (Human) protein is Glycerol-3-phosphate dehydrogenase 1-like protein.